Reading from the N-terminus, the 243-residue chain is 3-deoxy-manno-octulosonate cytidylyltransferase (243 aa).

This sequence belongs to the KdsB family.

The protein localises to the cytoplasm. It carries out the reaction 3-deoxy-alpha-D-manno-oct-2-ulosonate + CTP = CMP-3-deoxy-beta-D-manno-octulosonate + diphosphate. It functions in the pathway nucleotide-sugar biosynthesis; CMP-3-deoxy-D-manno-octulosonate biosynthesis; CMP-3-deoxy-D-manno-octulosonate from 3-deoxy-D-manno-octulosonate and CTP: step 1/1. Its pathway is bacterial outer membrane biogenesis; lipopolysaccharide biosynthesis. Functionally, activates KDO (a required 8-carbon sugar) for incorporation into bacterial lipopolysaccharide in Gram-negative bacteria. The chain is 3-deoxy-manno-octulosonate cytidylyltransferase from Helicobacter acinonychis (strain Sheeba).